The chain runs to 152 residues: UPF0266 membrane protein YobD (152 aa).

Transmembrane regions (helical) follow at residues 6–26, 45–65, and 67–87; these read LLLI…QFIM, VDSV…VTSH, and AQMT…IFWI.

It belongs to the UPF0266 family.

The protein localises to the cell inner membrane. The sequence is that of UPF0266 membrane protein YobD from Salmonella paratyphi C (strain RKS4594).